Consider the following 641-residue polypeptide: Methylenetetrahydrofolate reductase 2 (641 aa).

Glutamate 20 functions as the Proton donor/acceptor in the catalytic mechanism. Residues 20 to 25 (EYFPPK) and 52 to 53 (TW) each bind NAD(+). Residues 52–53 (TW), histidine 81, 111–113 (RGD), tyrosine 153, aspartate 172, and lysine 179 contribute to the FAD site. Aspartate 113 contacts substrate. Glutamine 190 serves as a coordination point for substrate.

Belongs to the methylenetetrahydrofolate reductase family. Requires FAD as cofactor.

It carries out the reaction (6S)-5-methyl-5,6,7,8-tetrahydrofolate + NADP(+) = (6R)-5,10-methylene-5,6,7,8-tetrahydrofolate + NADPH + H(+). The protein operates within one-carbon metabolism; tetrahydrofolate interconversion. Its function is as follows. Major methylenetetrahydrofolate reductase required to generate the methyl groups necessary for methionine synthetase to convert homocysteine to methionine. Performs 15 to 20 percent of the total methylenetetrahydrofolate reductase activity of the cells. In Schizosaccharomyces pombe (strain 972 / ATCC 24843) (Fission yeast), this protein is Methylenetetrahydrofolate reductase 2 (met11).